A 417-amino-acid polypeptide reads, in one-letter code: CinA-like protein (417 aa).

Belongs to the CinA family.

In Microcystis aeruginosa (strain NIES-843 / IAM M-2473), this protein is CinA-like protein.